A 319-amino-acid chain; its full sequence is ATP-dependent 6-phosphofructokinase (319 aa).

Residue Gly11 coordinates ATP. 21–25 (RAVVR) is an ADP binding site. Residues 72–73 (RC) and 102–105 (GDGS) each bind ATP. Asp103 provides a ligand contact to Mg(2+). Residue 125-127 (TID) coordinates substrate. Asp127 serves as the catalytic Proton acceptor. Position 154 (Arg154) interacts with ADP. Substrate contacts are provided by residues Arg162 and 169–171 (MGR). ADP contacts are provided by residues 185–187 (GAE), Arg211, and 213–215 (KRH). Substrate contacts are provided by residues Glu222, Arg243, and 249–252 (HVQR).

The protein belongs to the phosphofructokinase type A (PFKA) family. ATP-dependent PFK group I subfamily. Prokaryotic clade 'B1' sub-subfamily. As to quaternary structure, homotetramer. Requires Mg(2+) as cofactor.

Its subcellular location is the cytoplasm. It carries out the reaction beta-D-fructose 6-phosphate + ATP = beta-D-fructose 1,6-bisphosphate + ADP + H(+). Its pathway is carbohydrate degradation; glycolysis; D-glyceraldehyde 3-phosphate and glycerone phosphate from D-glucose: step 3/4. Its activity is regulated as follows. Allosterically activated by ADP and other diphosphonucleosides, and allosterically inhibited by phosphoenolpyruvate. Its function is as follows. Catalyzes the phosphorylation of D-fructose 6-phosphate to fructose 1,6-bisphosphate by ATP, the first committing step of glycolysis. The chain is ATP-dependent 6-phosphofructokinase from Clostridioides difficile (strain 630) (Peptoclostridium difficile).